The chain runs to 297 residues: Homoserine kinase (297 aa).

Residue 82-92 coordinates ATP; it reads PLTRGLGSSAS.

This sequence belongs to the GHMP kinase family. Homoserine kinase subfamily.

It is found in the cytoplasm. It catalyses the reaction L-homoserine + ATP = O-phospho-L-homoserine + ADP + H(+). The protein operates within amino-acid biosynthesis; L-threonine biosynthesis; L-threonine from L-aspartate: step 4/5. Catalyzes the ATP-dependent phosphorylation of L-homoserine to L-homoserine phosphate. This is Homoserine kinase from Bacillus mycoides (strain KBAB4) (Bacillus weihenstephanensis).